The chain runs to 441 residues: Argininosuccinate lyase (441 aa).

The protein belongs to the lyase 1 family. Argininosuccinate lyase subfamily.

It is found in the cytoplasm. It catalyses the reaction 2-(N(omega)-L-arginino)succinate = fumarate + L-arginine. Its pathway is amino-acid biosynthesis; L-arginine biosynthesis; L-arginine from L-ornithine and carbamoyl phosphate: step 3/3. The chain is Argininosuccinate lyase from Thermoanaerobacter pseudethanolicus (strain ATCC 33223 / 39E) (Clostridium thermohydrosulfuricum).